Reading from the N-terminus, the 526-residue chain is Glucose-6-phosphate isomerase (526 aa).

The active-site Proton donor is the E320. Active-site residues include H349 and K453.

Belongs to the GPI family.

Its subcellular location is the cytoplasm. The enzyme catalyses alpha-D-glucose 6-phosphate = beta-D-fructose 6-phosphate. It participates in carbohydrate biosynthesis; gluconeogenesis. It functions in the pathway carbohydrate degradation; glycolysis; D-glyceraldehyde 3-phosphate and glycerone phosphate from D-glucose: step 2/4. Functionally, catalyzes the reversible isomerization of glucose-6-phosphate to fructose-6-phosphate. The protein is Glucose-6-phosphate isomerase of Gloeothece citriformis (strain PCC 7424) (Cyanothece sp. (strain PCC 7424)).